Here is a 548-residue protein sequence, read N- to C-terminus: Esterase-5A (548 aa).

The N-terminal stretch at 1-19 (MHLVRWLICLIQLWIQLGA) is a signal peptide. C87 and C106 form a disulfide bridge. 2 N-linked (GlcNAc...) asparagine glycosylation sites follow: N95 and N116. The Acyl-ester intermediate role is filled by S210. C262 and C274 form a disulfide bridge. An N-linked (GlcNAc...) asparagine glycan is attached at N479. A disulfide bond links C518 and C539.

The protein belongs to the type-B carboxylesterase/lipase family.

Its subcellular location is the secreted. The enzyme catalyses a carboxylic ester + H2O = an alcohol + a carboxylate + H(+). In Drosophila persimilis (Fruit fly), this protein is Esterase-5A (Est-5A).